Consider the following 423-residue polypeptide: Mannose-6-phosphate isomerase (423 aa).

Ala-2 carries the N-acetylalanine modification. A phosphoserine mark is found at Ser-102 and Ser-108. Residues Gln-110, His-112, Glu-137, and His-276 each coordinate Zn(2+). Arg-295 is a catalytic residue.

Belongs to the mannose-6-phosphate isomerase type 1 family. Requires Zn(2+) as cofactor.

Its subcellular location is the cytoplasm. The enzyme catalyses D-mannose 6-phosphate = D-fructose 6-phosphate. Its pathway is nucleotide-sugar biosynthesis; GDP-alpha-D-mannose biosynthesis; alpha-D-mannose 1-phosphate from D-fructose 6-phosphate: step 1/2. Its function is as follows. Isomerase that catalyzes the interconversion of fructose-6-P and mannose-6-P and has a critical role in the supply of D-mannose derivatives required for many eukaryotic glycosylation reactions. The protein is Mannose-6-phosphate isomerase (MPI) of Macaca fascicularis (Crab-eating macaque).